The chain runs to 638 residues: 1-deoxy-D-xylulose-5-phosphate synthase (638 aa).

Residues H71 and 112 to 114 (SHA) each bind thiamine diphosphate. D144 contributes to the Mg(2+) binding site. Residues 145–146 (GA), N173, Y284, and E365 each bind thiamine diphosphate. A Mg(2+)-binding site is contributed by N173.

Belongs to the transketolase family. DXPS subfamily. In terms of assembly, homodimer. Requires Mg(2+) as cofactor. Thiamine diphosphate serves as cofactor.

The catalysed reaction is D-glyceraldehyde 3-phosphate + pyruvate + H(+) = 1-deoxy-D-xylulose 5-phosphate + CO2. It functions in the pathway metabolic intermediate biosynthesis; 1-deoxy-D-xylulose 5-phosphate biosynthesis; 1-deoxy-D-xylulose 5-phosphate from D-glyceraldehyde 3-phosphate and pyruvate: step 1/1. Functionally, catalyzes the acyloin condensation reaction between C atoms 2 and 3 of pyruvate and glyceraldehyde 3-phosphate to yield 1-deoxy-D-xylulose-5-phosphate (DXP). This is 1-deoxy-D-xylulose-5-phosphate synthase from Mycobacterium sp. (strain JLS).